We begin with the raw amino-acid sequence, 42 residues long: Bacteriocin bavaricin-MN (42 aa).

Cys-10 and Cys-15 are joined by a disulfide.

The protein belongs to the bacteriocin class IIA/YGNGV family.

Its subcellular location is the secreted. Functionally, has antimicrobial activity. This chain is Bacteriocin bavaricin-MN, found in Latilactobacillus sakei (Lactobacillus sakei).